Reading from the N-terminus, the 311-residue chain is MASTPCAACKLLRRKCTQECVFAPYFPPTNPQKFIFVHRVFGASNVTKILNDLPPDQREDTVNSLFYEAEARIRDPIYGCVGLISFLQQYLKKIQQDLLTAKEELVGYLGPDAVIPPPYLPPIGNNPPPNFMMSMEGMPPGVIPQGEPLMIREPNMSQQHHHQQPQDEQLQFIASDAQRMAAMMLERGDQQGMFNGYGIDNNGSVTATGFNQMDVNDQGAGGSLSGPSLALGSFGDAYQMGQETEHGHINHDQLQTQLMLQPPLQEGQEQTEEGQFLMQPMGQENLHDEEEEEELEPPVKWRMSENKEASF.

Residues 4–105 (TPCAACKLLR…QDLLTAKEEL (102 aa)) enclose the LOB domain. Low complexity predominate over residues 264–277 (LQEGQEQTEEGQFL). The disordered stretch occupies residues 264–311 (LQEGQEQTEEGQFLMQPMGQENLHDEEEEEELEPPVKWRMSENKEASF). Residues 287-296 (HDEEEEEELE) show a composition bias toward acidic residues. Residues 297–311 (PPVKWRMSENKEASF) are compositionally biased toward basic and acidic residues.

It belongs to the LOB domain-containing protein family.

The protein is LOB domain-containing protein 10 (LBD10) of Arabidopsis thaliana (Mouse-ear cress).